The primary structure comprises 464 residues: tRNA modification GTPase MnmE (464 aa).

The (6S)-5-formyl-5,6,7,8-tetrahydrofolate site is built by Arg-27, Glu-89, and Arg-128. The region spanning 225 to 384 (GLATAIIGHP…LEDRIAAMFF (160 aa)) is the TrmE-type G domain. Position 235 (Asn-235) interacts with K(+). GTP is bound by residues 235–240 (NVGKSS), 254–260 (TDVAGTT), and 279–282 (DTAG). Ser-239 is a Mg(2+) binding site. K(+)-binding residues include Thr-254, Val-256, and Thr-259. Position 260 (Thr-260) interacts with Mg(2+). Lys-464 serves as a coordination point for (6S)-5-formyl-5,6,7,8-tetrahydrofolate.

This sequence belongs to the TRAFAC class TrmE-Era-EngA-EngB-Septin-like GTPase superfamily. TrmE GTPase family. Homodimer. Heterotetramer of two MnmE and two MnmG subunits. K(+) is required as a cofactor.

The protein localises to the cytoplasm. Its function is as follows. Exhibits a very high intrinsic GTPase hydrolysis rate. Involved in the addition of a carboxymethylaminomethyl (cmnm) group at the wobble position (U34) of certain tRNAs, forming tRNA-cmnm(5)s(2)U34. The protein is tRNA modification GTPase MnmE of Pediococcus pentosaceus (strain ATCC 25745 / CCUG 21536 / LMG 10740 / 183-1w).